A 218-amino-acid polypeptide reads, in one-letter code: Methylthioribulose-1-phosphate dehydratase (218 aa).

2 residues coordinate Zn(2+): H107 and H109.

It belongs to the aldolase class II family. MtnB subfamily. Zn(2+) is required as a cofactor.

The enzyme catalyses 5-(methylsulfanyl)-D-ribulose 1-phosphate = 5-methylsulfanyl-2,3-dioxopentyl phosphate + H2O. It functions in the pathway amino-acid biosynthesis; L-methionine biosynthesis via salvage pathway; L-methionine from S-methyl-5-thio-alpha-D-ribose 1-phosphate: step 2/6. Functionally, catalyzes the dehydration of methylthioribulose-1-phosphate (MTRu-1-P) into 2,3-diketo-5-methylthiopentyl-1-phosphate (DK-MTP-1-P). The protein is Methylthioribulose-1-phosphate dehydratase of Xylella fastidiosa (strain 9a5c).